Reading from the N-terminus, the 84-residue chain is Exodeoxyribonuclease 7 small subunit (84 aa).

Belongs to the XseB family. In terms of assembly, heterooligomer composed of large and small subunits.

It is found in the cytoplasm. It catalyses the reaction Exonucleolytic cleavage in either 5'- to 3'- or 3'- to 5'-direction to yield nucleoside 5'-phosphates.. Its function is as follows. Bidirectionally degrades single-stranded DNA into large acid-insoluble oligonucleotides, which are then degraded further into small acid-soluble oligonucleotides. The sequence is that of Exodeoxyribonuclease 7 small subunit from Yersinia enterocolitica serotype O:8 / biotype 1B (strain NCTC 13174 / 8081).